A 1071-amino-acid chain; its full sequence is Exportin-1 (1071 aa).

Residues 46–112 (AQEVLTHLKE…KKYVVGLIIK (67 aa)) form the Importin N-terminal domain. HEAT repeat units follow at residues 217 to 240 (QNAP…PLGY), 241 to 277 (IFET…VSVS), 354 to 472 (MLLV…YVDT), 515 to 553 (RFLV…QYPR), 560 to 597 (KFLK…KCRR), and 602 to 639 (VQVG…AVGY). The tract at residues 327–450 (CTFLKEHGQL…VREFMKDTDS (124 aa)) is necessary for interaction with Ran and nuclear export complex formation. Ser-391 is modified (phosphoserine). The segment at 411 to 481 (TVLSKVRLLM…TEIIMTKKLQ (71 aa)) is necessary for interaction with RANBP3. Lys-446 bears the N6-acetyllysine mark. Position 448 is a phosphothreonine (Thr-448). Ser-450 is modified (phosphoserine). At Tyr-454 the chain carries Phosphotyrosine. Lys-693 carries the post-translational modification N6-acetyllysine. 4 HEAT repeats span residues 775-813 (NFVP…KLGG), 885-916 (TMRN…SFYQ), 917-954 (TYFC…NLVE), and 1002-1039 (FSLN…EERE). Residue Ser-1031 is modified to Phosphoserine.

It belongs to the exportin family. Found in a U snRNA export complex with PHAX/RNUXA, NCBP1/CBP80, NCBP2/CBP20, RAN, XPO1 and m7G-capped RNA. Component of a nuclear export receptor complex composed of KPNB1, RAN, SNUPN and XPO1. Found in a trimeric export complex with SNUPN, RAN and XPO1. Found in a nuclear export complex with RANBP3 and RAN. Found in a 60S ribosomal subunit export complex with NMD3, RAN, XPO1. Interacts with DDX3X, NMD3, NUP42, NUP88, NUP214, RANBP3 and TERT. Interacts with NEMF (via its N-terminus). Interacts with the monomeric form of BIRC5/survivin deacetylated at 'Lys-129'. Interacts with SERTAD2; the interaction translocates SERTAD2 out of the nucleus. Interacts with ATF2. Interacts with SLC35G1 and STIM1. Interacts with DCAF8. Interacts with DTNBP1 and the interaction translocates DTNBP1 out of the nucleus. Interacts with CPEB3. Interacts with HAX1. Interacts with BOK; translocates to the cytoplasm. Interacts with HSP90AB1. Interacts with LRPPRC; interacts with LRPPRC alone and also when LRPPRC is in complex with EIF4E and with EIF4E sensitivity element (4ESE)-containing mRNAs to form an EIF4E-dependent mRNA export complex.

It is found in the cytoplasm. Its subcellular location is the nucleus. It localises to the nucleoplasm. The protein resides in the cajal body. The protein localises to the nucleolus. Functionally, mediates the nuclear export of cellular proteins (cargos) bearing a leucine-rich nuclear export signal (NES) and of RNAs. In the nucleus, in association with RANBP3, binds cooperatively to the NES on its target protein and to the GTPase Ran in its active GTP-bound form. Docking of this complex to the nuclear pore complex (NPC) is mediated through binding to nucleoporins. Upon transit of a nuclear export complex into the cytoplasm, disassembling of the complex and hydrolysis of Ran-GTP to Ran-GDP (induced by RANBP1 and RANGAP1, respectively) cause release of the cargo from the export receptor. The directionality of nuclear export is thought to be conferred by an asymmetric distribution of the GTP- and GDP-bound forms of Ran between the cytoplasm and nucleus. Involved in U3 snoRNA transport from Cajal bodies to nucleoli. Binds to late precursor U3 snoRNA bearing a TMG cap. The chain is Exportin-1 (Xpo1) from Mus musculus (Mouse).